The primary structure comprises 315 residues: Probable mannose-6-phosphate isomerase GmuF (315 aa).

Residues glutamine 95, histidine 97, glutamate 115, and histidine 172 each contribute to the Zn(2+) site. The active site involves arginine 192.

The protein belongs to the mannose-6-phosphate isomerase type 1 family. Requires Zn(2+) as cofactor.

It carries out the reaction D-mannose 6-phosphate = D-fructose 6-phosphate. In terms of biological role, seems to be involved in the degradation of glucomannan. The polypeptide is Probable mannose-6-phosphate isomerase GmuF (gmuF) (Bacillus subtilis (strain 168)).